A 280-amino-acid chain; its full sequence is Bifunctional protein FolD (280 aa).

Residues 164–166, serine 189, and valine 230 contribute to the NADP(+) site; that span reads GRS.

This sequence belongs to the tetrahydrofolate dehydrogenase/cyclohydrolase family. In terms of assembly, homodimer.

It catalyses the reaction (6R)-5,10-methylene-5,6,7,8-tetrahydrofolate + NADP(+) = (6R)-5,10-methenyltetrahydrofolate + NADPH. The catalysed reaction is (6R)-5,10-methenyltetrahydrofolate + H2O = (6R)-10-formyltetrahydrofolate + H(+). Its pathway is one-carbon metabolism; tetrahydrofolate interconversion. Its function is as follows. Catalyzes the oxidation of 5,10-methylenetetrahydrofolate to 5,10-methenyltetrahydrofolate and then the hydrolysis of 5,10-methenyltetrahydrofolate to 10-formyltetrahydrofolate. This is Bifunctional protein FolD from Geotalea daltonii (strain DSM 22248 / JCM 15807 / FRC-32) (Geobacter daltonii).